The following is a 481-amino-acid chain: uncharacterized protein (481 aa).

A run of 11 helical transmembrane segments spans residues 14-34 (LGFC…GIFL), 46-66 (FAPM…IVFA), 90-110 (IGIY…GVLA), 134-154 (FSVK…INLF), 167-187 (TVGK…IITT), 218-238 (FSSM…FESI), 258-278 (IAIF…MLLG), 303-323 (IIVV…SFGA), 377-397 (LAVI…IALA), 411-431 (AFTD…LAVS), and 446-466 (YFSI…AYLH).

Belongs to the amino acid-polyamine-organocation (APC) superfamily.

Its subcellular location is the cell membrane. Probable amino-acid or metabolite transport protein. This is an uncharacterized protein from Mycobacterium tuberculosis (strain CDC 1551 / Oshkosh).